Reading from the N-terminus, the 256-residue chain is Transmembrane protein 187 (256 aa).

7 consecutive transmembrane segments (helical) span residues 8 to 28 (ALFH…TGIF), 51 to 71 (FLAM…GVYW), 94 to 112 (VFAG…RIGM), 119 to 139 (VLDQ…CLCL), 146 to 168 (WLFL…HPHG), 193 to 213 (NISS…FVVL), and 233 to 253 (FWSK…LTSL).

It localises to the membrane. The protein is Transmembrane protein 187 (TMEM187) of Bos taurus (Bovine).